Here is a 269-residue protein sequence, read N- to C-terminus: Phosphate import ATP-binding protein PstB 2 (269 aa).

An ABC transporter domain is found at 23 to 264; that stretch reads LHTEDLHVFY…PKIQATEDYV (242 aa). 55-62 provides a ligand contact to ATP; that stretch reads GPSGCGKS.

Belongs to the ABC transporter superfamily. Phosphate importer (TC 3.A.1.7) family. In terms of assembly, the complex is composed of two ATP-binding proteins (PstB), two transmembrane proteins (PstC and PstA) and a solute-binding protein (PstS).

The protein resides in the cell membrane. The enzyme catalyses phosphate(out) + ATP + H2O = ADP + 2 phosphate(in) + H(+). Its function is as follows. Part of the ABC transporter complex PstSACB involved in phosphate import. Responsible for energy coupling to the transport system. This chain is Phosphate import ATP-binding protein PstB 2, found in Enterococcus faecalis (strain ATCC 700802 / V583).